Here is an 882-residue protein sequence, read N- to C-terminus: Pentatricopeptide repeat-containing protein At3g03580 (882 aa).

PPR repeat units lie at residues 3–37 (TRVS…GLDS), 38–68 (SDFF…VSPA), 70–104 (NVYL…KVSP), 105–139 (DKYT…GFES), 140–170 (DLFV…MPVR), 171–205 (DLVS…WIVP), 206–240 (DSFT…GVNS), 241–271 (VVVV…MDVR), 272–307 (DSVS…KPDL), 309–340 (TVSS…GFVL), 341–371 (ESTV…MECK), 372–406 (DTVS…EEQA), 407–441 (DHIT…GICI), 442–472 (DLSV…MGTG), 473–507 (DTVT…EVVP), 508–542 (DMAT…GYES), 543–573 (ELQI…MSRR), 574–608 (DVVT…GIVP), 609–639 (DSVV…MKTH), and 645–675 (MIEH…MPIK). The interval 680–755 (IWASVLRACR…NPGYSWIEVG (76 aa)) is type E motif. The segment at 756–786 (KNVHVFSSGDDSAPQSEAIYKSLEILYSLMA) is type E(+) motif. Positions 787-882 (KEGYIPDPRE…DGTCSCKDRW (96 aa)) are type DYW motif.

This sequence belongs to the PPR family. PCMP-H subfamily.

This is Pentatricopeptide repeat-containing protein At3g03580 (PCMP-H23) from Arabidopsis thaliana (Mouse-ear cress).